Reading from the N-terminus, the 84-residue chain is Putative antitoxin VapB37 (84 aa).

Probable antitoxin component of a type II toxin-antitoxin (TA) system. Its putative cognate toxin is VapC37. In Mycobacterium tuberculosis (strain CDC 1551 / Oshkosh), this protein is Putative antitoxin VapB37 (vapB37).